The chain runs to 66 residues: Large ribosomal subunit protein uL29 (66 aa).

The protein belongs to the universal ribosomal protein uL29 family.

This chain is Large ribosomal subunit protein uL29, found in Allorhizobium ampelinum (strain ATCC BAA-846 / DSM 112012 / S4) (Agrobacterium vitis (strain S4)).